Reading from the N-terminus, the 667-residue chain is METSESSTSDYRQTEGEGEGVPGTLSTAVCEHLRKLCLREFPCGIGSWNKSRFLPQKCRVWRELVPKEEETLVPEEETVEALLGLVRSNHSPWAMLKDASAEDRFLRELAIQNPLMIKDTFFYSYFRSLRVVNKGVSLVDKDLLKFLKLEELVLSANKIEEIDANNLPPTLKVLELYGNLIASMECLCSAPPPRLQHLGLGHNKLLGPLESLYVTSHNWPQLVSLDLGFNNLTDLQNMILGLSTLRHLRLLVLQGNPLSLVPYYRGFTIDSLAHLCVLDDITVSPNEKHQFRGLNIHGDLLAREAQFVVTIGNVRGVLDSSILDPEPGPDGPFISYSYYVTYDFVEDEDMERNVSGLVEATHHDSVLDEIDKHFSGTDEEDQQEDPLDGRHRHRGRQRFHPGSTEEMSKELSEFIAKEMSQMAEGSVESGITEVDWSETSISIHSAPLPQSIDSSEELAKLRPKIDIQLCPSPGTVLFNTVHKPWSDVIPCTYEMKHTLKELIRVKAFLLAGTTVSIVEEKILSWPVVPTPVESPLPAKKGKDNNKKKEPAKDKVHKKKKEPPRELRQDPPVLTVLGSGLVYLEPLLAGEAVVSTVCNFGVVRTLETDRLTHARDSKKVKKSLKKDRSKTVPPTMESGYQPEPLSVEVQIQLHQYRSVEEAFLSLID.

Polar residues predominate over residues 1 to 11 (METSESSTSDY). The segment at 1-24 (METSESSTSDYRQTEGEGEGVPGT) is disordered. 4 LRR repeats span residues 148 to 169 (KLEE…NLPP), 170 to 191 (TLKV…CSAP), 194 to 213 (RLQH…ESLY), and 221 to 242 (QLVS…ILGL). The LRRCT domain maps to 256–294 (NPLSLVPYYRGFTIDSLAHLCVLDDITVSPNEKHQFRGL). 3 disordered regions span residues 374–407 (FSGT…TEEM), 533–570 (ESPL…RQDP), and 616–640 (SKKV…SGYQ). Residues 377–386 (TDEEDQQEDP) show a composition bias toward acidic residues. Basic residues predominate over residues 390–399 (RHRHRGRQRF). Over residues 540-553 (KGKDNNKKKEPAKD) the composition is skewed to basic and acidic residues. A compositionally biased stretch (basic residues) spans 617–627 (KKVKKSLKKDR).

The chain is Leucine-rich repeat-containing protein 43 (Lrrc43) from Mus musculus (Mouse).